A 319-amino-acid chain; its full sequence is MTSRTNEFFGLTKNGDIDAANIPLKRISYTDPFLAEGYRIHETIVNLLVFLKKIRGAYLKDRTFSNVQRLSKPLMECSLEELSKLELDEVQRDEIEHEVSSAISSCIHQIAKLQEIVKEQQSQIPKKSGWLQGLRDPSKLSKKETLVAHHSSVLWYLQSELSDVSSVLYHLQDLRLKRGQEKRNIASDFLTKNPTDENSAVEIPESELQTFFTQQQLQELEQENDVLLQEFEHTMERLRDTGKSLADITRLQSEISAQLSIQSSAAEKLYDDALNVMDSLSGGNQQLIKAKSRSSRTARLLFCIFTVMGLLLLSLDRIV.

Residues 1-297 (MTSRTNEFFG…IKAKSRSSRT (297 aa)) are Cytoplasmic-facing. The region spanning 228–290 (LQEFEHTMER…SGGNQQLIKA (63 aa)) is the t-SNARE coiled-coil homology domain. Residues 298–315 (ARLLFCIFTVMGLLLLSL) form a helical; Anchor for type IV membrane protein membrane-spanning segment. Residues 316 to 319 (DRIV) lie on the Lumenal side of the membrane.

It belongs to the syntaxin family. In terms of assembly, component of a SNARE complex consisting of ufe1, use1, sec20 and sec22 or ykt6. Interacts with sad1.

It localises to the endoplasmic reticulum membrane. In terms of biological role, syntaxin required for targeting and fusion of Golgi-derived retrograde transport vesicles with the ER. The sequence is that of Syntaxin ufe1 (ufe1) from Schizosaccharomyces pombe (strain 972 / ATCC 24843) (Fission yeast).